Reading from the N-terminus, the 323-residue chain is Cyclin-H (323 aa).

At S5 the chain carries Phosphoserine; by CDK8. S132 carries the phosphoserine modification. The tract at residues D299 to L323 is disordered. Residues Y302 to E311 show a composition bias toward basic and acidic residues. Positions E312–L323 are enriched in acidic residues. The residue at position 315 (T315) is a Phosphothreonine. Position 322 is a phosphoserine (S322).

It belongs to the cyclin family. Cyclin C subfamily. As to quaternary structure, associates primarily with CDK7 and MAT1 to form the CAK complex. CAK can further associate with the core-TFIIH to form the TFIIH basal transcription factor.

It is found in the nucleus. In terms of biological role, regulates CDK7, the catalytic subunit of the CDK-activating kinase (CAK) enzymatic complex. CAK activates the cyclin-associated kinases CDK1, CDK2, CDK4 and CDK6 by threonine phosphorylation. CAK complexed to the core-TFIIH basal transcription factor activates RNA polymerase II by serine phosphorylation of the repetitive C-terminal domain (CTD) of its large subunit (POLR2A), allowing its escape from the promoter and elongation of the transcripts. Involved in cell cycle control and in RNA transcription by RNA polymerase II. Its expression and activity are constant throughout the cell cycle. The polypeptide is Cyclin-H (CCNH) (Macaca fascicularis (Crab-eating macaque)).